A 217-amino-acid polypeptide reads, in one-letter code: Probable GTP-binding protein EngB (217 aa).

Positions glycine 33 to arginine 217 constitute an EngB-type G domain. Residues glycine 41–serine 48, glycine 68–glutamate 72, aspartate 95–glycine 98, threonine 162–aspartate 165, and threonine 196–serine 198 contribute to the GTP site. Mg(2+) contacts are provided by serine 48 and threonine 70.

Belongs to the TRAFAC class TrmE-Era-EngA-EngB-Septin-like GTPase superfamily. EngB GTPase family. Mg(2+) is required as a cofactor.

In terms of biological role, necessary for normal cell division and for the maintenance of normal septation. This Sinorhizobium medicae (strain WSM419) (Ensifer medicae) protein is Probable GTP-binding protein EngB.